Reading from the N-terminus, the 491-residue chain is NADPH:adrenodoxin oxidoreductase, mitochondrial (491 aa).

A mitochondrion-targeting transit peptide spans 1-32 (MASRCWRWWGWSAWPRTRLPPAGSTPSFCHHF). The FAD site is built by A49, E69, L77, and V113. NADP(+)-binding positions include 184 to 187 (QGNV), 228 to 229 (RR), and E240. Phosphoserine occurs at positions 310 and 317. FAD is bound by residues W398 and 405-407 (GVI). G405 provides a ligand contact to NADP(+).

The protein belongs to the ferredoxin--NADP reductase type 1 family. Monomer. Interacts directly with FDX1. FAD is required as a cofactor.

The protein resides in the mitochondrion. The protein localises to the mitochondrion inner membrane. The enzyme catalyses 2 reduced [adrenodoxin] + NADP(+) + H(+) = 2 oxidized [adrenodoxin] + NADPH. The catalysed reaction is 2 reduced [2Fe-2S]-[ferredoxin] + NADP(+) + H(+) = 2 oxidized [2Fe-2S]-[ferredoxin] + NADPH. The protein operates within steroid metabolism; cholesterol metabolism. Its function is as follows. Serves as the first electron transfer protein in all the mitochondrial P450 systems including cholesterol side chain cleavage in all steroidogenic tissues, steroid 11-beta hydroxylation in the adrenal cortex, 25-OH-vitamin D3-24 hydroxylation in the kidney, and sterol C-27 hydroxylation in the liver. Also acts as a ferredoxin--NADP(+) reductase essential for coenzyme Q biosynthesis: together with FDX2, transfers the electrons required for the hydroxylation reaction performed by COQ6. The protein is NADPH:adrenodoxin oxidoreductase, mitochondrial of Homo sapiens (Human).